The following is a 337-amino-acid chain: uncharacterized protein (337 aa).

The next 2 helical transmembrane spans lie at 241–261 (FTLL…GAFI) and 273–293 (ASLI…IGII).

It belongs to the glycosyltransferase 2 family.

Its subcellular location is the cell membrane. This is an uncharacterized protein from Bacillus subtilis (strain 168).